The following is a 198-amino-acid chain: Glutamyl-tRNA(Gln) amidotransferase subunit C, mitochondrial (198 aa).

It belongs to the GatC family. Subunit of the heterotrimeric GatCAB amidotransferase (AdT) complex, composed of A, B and C subunits.

The protein localises to the mitochondrion. It catalyses the reaction L-glutamyl-tRNA(Gln) + L-glutamine + ATP + H2O = L-glutaminyl-tRNA(Gln) + L-glutamate + ADP + phosphate + H(+). Allows the formation of correctly charged Gln-tRNA(Gln) through the transamidation of misacylated Glu-tRNA(Gln) in the mitochondria. The reaction takes place in the presence of glutamine and ATP through an activated gamma-phospho-Glu-tRNA(Gln). In Caenorhabditis remanei (Caenorhabditis vulgaris), this protein is Glutamyl-tRNA(Gln) amidotransferase subunit C, mitochondrial.